The primary structure comprises 262 residues: Pyridoxine 5'-phosphate synthase (262 aa).

N6 is a binding site for 3-amino-2-oxopropyl phosphate. 8-9 (DH) is a 1-deoxy-D-xylulose 5-phosphate binding site. 3-amino-2-oxopropyl phosphate is bound at residue R17. The Proton acceptor role is filled by H43. Positions 45 and 50 each coordinate 1-deoxy-D-xylulose 5-phosphate. Residue E70 is the Proton acceptor of the active site. T102 contacts 1-deoxy-D-xylulose 5-phosphate. H215 acts as the Proton donor in catalysis. 3-amino-2-oxopropyl phosphate-binding positions include G216 and 237-238 (GH).

It belongs to the PNP synthase family. Homooctamer; tetramer of dimers.

The protein resides in the cytoplasm. It catalyses the reaction 3-amino-2-oxopropyl phosphate + 1-deoxy-D-xylulose 5-phosphate = pyridoxine 5'-phosphate + phosphate + 2 H2O + H(+). The protein operates within cofactor biosynthesis; pyridoxine 5'-phosphate biosynthesis; pyridoxine 5'-phosphate from D-erythrose 4-phosphate: step 5/5. Catalyzes the complicated ring closure reaction between the two acyclic compounds 1-deoxy-D-xylulose-5-phosphate (DXP) and 3-amino-2-oxopropyl phosphate (1-amino-acetone-3-phosphate or AAP) to form pyridoxine 5'-phosphate (PNP) and inorganic phosphate. The sequence is that of Pyridoxine 5'-phosphate synthase from Helicobacter pylori (strain P12).